A 511-amino-acid chain; its full sequence is MTMEINNTDPSENMPLPDDVDLSGSRAFDDSKLAKLNGIISQGLDPYPYRFEKNGDICEILVKFEDFEKNEGLSVRTAGRLYNIRKHGKMIFADLGDQTGRIQVLIRKGNLPDEEFATFKNLMDSGDIIGIQGELFRTKRGENSISVSEFSLLSKSLCALPEKFHGLKDVETRYRKRYLDLIVNAEKREIFVMRSKLISEIRRFLADREFLEFETPILQTVYGGANARPFKTFHNCLGQNLFLRIAPELYLKRLVVGGYEKVFEISKNFRNEDIDTTHNPEFTMIEVYEAYRDYNDMMDLTEALISELVFRLTGGYEVKMGENTINLRSPWKRISMEGALKEYAGLDVFSHSLEELKQIAIQNRIEDYEKAKSHGEFLALLFEGLVEDKLVNPTFIYDFPVENSPLAKNHREKEGFVERFELFLNGWELANGYSELNDPLEQEKRFEEQDKKRKLGDLEAQTVDYDFINALGYGLPPTGGMGLGIDRLTMILAGLESIKEVILFPQMKRED.

The span at 1–11 shows a compositional bias: polar residues; sequence MTMEINNTDPS. Positions 1–21 are disordered; the sequence is MTMEINNTDPSENMPLPDDVD. Mg(2+) is bound by residues Glu421 and Glu428.

It belongs to the class-II aminoacyl-tRNA synthetase family. As to quaternary structure, homodimer. Requires Mg(2+) as cofactor.

The protein localises to the cytoplasm. The catalysed reaction is tRNA(Lys) + L-lysine + ATP = L-lysyl-tRNA(Lys) + AMP + diphosphate. This Methanosarcina acetivorans (strain ATCC 35395 / DSM 2834 / JCM 12185 / C2A) protein is Lysine--tRNA ligase 2.